A 226-amino-acid chain; its full sequence is Protein pdh1 (226 aa).

Positions 1-26 (MNHFSKFSVTKRLLILEVLFSAISFG) are cleaved as a signal peptide. Over 27–41 (ISIYIKVFGRSSIVT) the chain is Extracellular. The helical transmembrane segment at 42–62 (FFLLCFHLVPNALFLFPWTII) threads the bilayer. Topologically, residues 63–65 (TTS) are cytoplasmic. The helical transmembrane segment at 66–86 (FVDANVFTLLSSILILSVYGV) threads the bilayer. Over 87–97 (EIERSWGHKEY) the chain is Extracellular. Residues 98 to 118 (LLFCQFLTVIPNIAVLIPCFI) traverse the membrane as a helical segment. At 119–191 (AYKITDSHYL…VFQSFPWTYF (73 aa)) the chain is on the cytoplasmic side. A helical transmembrane segment spans residues 192–212 (CLAVSGTCISELYVLFVHPVV). Residues 213–226 (QELFHLESHTQLPI) are Extracellular-facing.

The protein localises to the membrane. This is Protein pdh1 (pdh1) from Schizosaccharomyces pombe (strain 972 / ATCC 24843) (Fission yeast).